Consider the following 152-residue polypeptide: UPF0266 membrane protein PM0830 (152 aa).

A run of 3 helical transmembrane segments spans residues 1 to 21 (MMII…YAFY), 45 to 65 (KDAL…YTNL), and 66 to 86 (SSAT…AAFI).

It belongs to the UPF0266 family.

Its subcellular location is the cell inner membrane. This Pasteurella multocida (strain Pm70) protein is UPF0266 membrane protein PM0830.